The following is a 316-amino-acid chain: MATLSDVAKKANVSKMTVSRVINHPETVTDELKKLVHSAMKELNYIPNYAARALVQNRTQVVKLLILEEMDTTEPYYMNLLTGISRELDRNHYALQLVTRNSLNIGQCDGIIATGLRKNDFEGVIKAFEKPLVVFGQNEMGYDFIDVNNEKGTFMATRHVMGLGEREVVFFGIDLDEPFERAREQGYIRAMNKSFKKSNMFRIDNSSKKSECLARELLKSMDNQAAFVCASDRIALGVIRAAQSLGKRIPEDVAVTGNDGVFLDRISSPRLTTVRQPVVEMGEACAKMLLKKMNEDGAAQGSLFFEPELIVRESTL.

Positions 1–56 (MATLSDVAKKANVSKMTVSRVINHPETVTDELKKLVHSAMKELNYIPNYAARALVQ) constitute an HTH lacI-type domain. The H-T-H motif DNA-binding region spans 4-23 (LSDVAKKANVSKMTVSRVIN).

This is an uncharacterized protein from Bacillus subtilis (strain 168).